The following is a 273-amino-acid chain: NH(3)-dependent NAD(+) synthetase (273 aa).

Residue 47–54 participates in ATP binding; it reads GISGGQDS. A Mg(2+)-binding site is contributed by D53. Residue R139 coordinates deamido-NAD(+). T159 serves as a coordination point for ATP. Position 164 (E164) interacts with Mg(2+). K172 and D179 together coordinate deamido-NAD(+). ATP contacts are provided by K188 and T210. Position 259–260 (259–260) interacts with deamido-NAD(+); that stretch reads HK.

It belongs to the NAD synthetase family. In terms of assembly, homodimer.

The enzyme catalyses deamido-NAD(+) + NH4(+) + ATP = AMP + diphosphate + NAD(+) + H(+). It functions in the pathway cofactor biosynthesis; NAD(+) biosynthesis; NAD(+) from deamido-NAD(+) (ammonia route): step 1/1. Functionally, catalyzes the ATP-dependent amidation of deamido-NAD to form NAD. Uses ammonia as a nitrogen source. This chain is NH(3)-dependent NAD(+) synthetase, found in Staphylococcus saprophyticus subsp. saprophyticus (strain ATCC 15305 / DSM 20229 / NCIMB 8711 / NCTC 7292 / S-41).